We begin with the raw amino-acid sequence, 245 residues long: Peroxisome biogenesis protein 19-2 (245 aa).

The segment at 17-106 (ALDDFKDLNL…LSSKQQPTGS (90 aa)) is disordered. Composition is skewed to basic and acidic residues over residues 33 to 44 (VKKEEGDKKETE) and 71 to 92 (AKED…ETVK). Over residues 96-105 (SLSSKQQPTG) the composition is skewed to polar residues. Cysteine 242 bears the Cysteine methyl ester mark. Cysteine 242 carries S-farnesyl cysteine lipidation. Residues 243 to 245 (CVM) constitute a propeptide, removed in mature form.

It belongs to the peroxin-19 family. In terms of assembly, dimer. Interacts with PEX10 (via C-terminus). Post-translationally, may be farnesylated. In terms of tissue distribution, expressed in roots, leaves, flowers, siliques and stems. Highest expression in roots and leaves.

It is found in the cytoplasm. The protein resides in the peroxisome membrane. In terms of biological role, contributes to morphology determination of peroxisomes, but not to import of peroxisomal matrix proteins. Required for proper post-translational import and stabilization of peroxisomal membrane proteins (PMPs). Acts as a cytosolic import receptor for PMPs and delivers them to the docking factor PEX3 at the peroxisomal membrane for subsequent insertion into the membrane. Acts as a chaperone in stabilizing or maintaining PMPs in the lipid bilayer. In Arabidopsis thaliana (Mouse-ear cress), this protein is Peroxisome biogenesis protein 19-2 (PEX19-2).